A 91-amino-acid polypeptide reads, in one-letter code: uncharacterized protein (91 aa).

The segment at Glu71–Val91 is disordered.

This is an uncharacterized protein from Archaeoglobus fulgidus (strain ATCC 49558 / DSM 4304 / JCM 9628 / NBRC 100126 / VC-16).